Reading from the N-terminus, the 625-residue chain is Keratin, type II cytoskeletal 1 (625 aa).

A compositionally biased stretch (low complexity) spans methionine 1 to arginine 12. Positions methionine 1–alanine 27 are disordered. Residues methionine 1–glutamine 178 are head. Arginine 12 is subject to Omega-N-methylarginine. Serine 23 and serine 26 each carry phosphoserine. An Omega-N-methylarginine modification is found at arginine 51. The residue at position 69 (serine 69) is a Phosphoserine. Residues glutamine 171–glutamine 319 are a coiled coil. A coil 1A region spans residues glutamate 179–leucine 214. Positions glutamate 179–methionine 492 constitute an IF rod domain. The linker 1 stretch occupies residues glutamine 215–tyrosine 233. The coil 1B stretch occupies residues isoleucine 234–methionine 325. Lysine 275 is modified (N6,N6-dimethyllysine). The tract at residues glutamine 326–isoleucine 349 is linker 12. Residues isoleucine 350–glutamate 488 form a coil 2 region. A coiled-coil region spans residues aspartate 388–aspartate 475. Residues glutamate 489–asparagine 625 are tail. Disordered stretches follow at residues cysteine 496 to glycine 525 and serine 560 to asparagine 625. The span at valine 500–serine 515 shows a compositional bias: low complexity. Gly residues-rich tracts occupy residues serine 516–glycine 525 and serine 560–lysine 606. Omega-N-methylarginine is present on residues arginine 517, arginine 574, and arginine 596. A compositionally biased stretch (polar residues) spans valine 613 to asparagine 625.

Belongs to the intermediate filament family. Heterotetramer of two type I and two type II keratins. Heterodimer with KRT10. Two heterodimers of KRT1 and KRT10 form a heterotetramer. Forms a heterodimer with KRT14; the interaction is more abundant in the absence of KRT5. Interacts with ITGB1 in the presence of RACK1 and SRC, and with RACK1. Interacts with C1QBP; the association represents a cell surface kininogen receptor. Interacts with EPPK1; interaction is dependent of higher-order structure of intermediate filament. In terms of processing, undergoes deimination of some arginine residues (citrullination).

Its subcellular location is the cell membrane. The protein localises to the cytoplasm. Its function is as follows. May regulate the activity of kinases such as PKC and SRC via binding to integrin beta-1 (ITB1) and the receptor of activated protein C kinase 1 (RACK1). In complex with C1QBP is a high affinity receptor for kininogen-1/HMWK. The chain is Keratin, type II cytoskeletal 1 from Rattus norvegicus (Rat).